Consider the following 980-residue polypeptide: Macrophage colony-stimulating factor 1 receptor (980 aa).

An N-terminal signal peptide occupies residues 1 to 19; it reads MGPRALLVLLVATAWHAQG. The Extracellular portion of the chain corresponds to 20 to 514; the sequence is VPVIQPSGPE…QLPDELLFTP (495 aa). Ig-like C2-type domains follow at residues 21–100, 107–197, 202–297, 299–397, and 400–499; these read PVIQ…IHLY, PWKV…KVQK, PATL…RVVE, AYLN…LTLR, and PEVR…WPIS. Residues C42 and C84 are joined by a disulfide bond. Residues N45, N73, N94, N153, N275, N286, N302, N335, N410, N477, and N490 are each glycosylated (N-linked (GlcNAc...) asparagine). 2 disulfide bridges follow: C127–C177 and C224–C278. Residues C417 and C482 are joined by a disulfide bond. The helical transmembrane segment at 515–535 threads the bilayer; the sequence is VLLTCMSIMALLLLLLLLLLY. The Cytoplasmic segment spans residues 536-980; the sequence is KYKQKPKYQV…LLQPNNYQFC (445 aa). A regulatory juxtamembrane domain region spans residues 539 to 571; sequence QKPKYQVRWKIIESYEGNSYTFIDPTQLPYNEK. Residues Y543 and Y558 each carry the phosphotyrosine; by autocatalysis modification. Residues 579-908 enclose the Protein kinase domain; it reads LQFGKTLGAG…PTFQQICSLL (330 aa). Residues 585–593 and K613 contribute to the ATP site; that span reads LGAGAFGKV. Phosphotyrosine; by autocatalysis occurs at positions 696 and 705. Residue S710 is modified to Phosphoserine. Phosphotyrosine; by autocatalysis is present on Y720. The segment at 723–743 is disordered; it reads MRPVSTSSSNDSFSEEDLGKE. The active-site Proton acceptor is D776. Residues 794–816 form an activation loop region; that stretch reads DFGLARDIMNDSNYIVKGNARLP. Phosphotyrosine; by autocatalysis occurs at positions 807 and 921. A disordered region spans residues 918–959; sequence VPNYTNLPSSSSSSSSSSSSCRTGSGGGSSSEPEEESSSEHL. Positions 926–940 are enriched in low complexity; the sequence is SSSSSSSSSSSSCRT. Y977 is subject to Phosphotyrosine; by autocatalysis.

Belongs to the protein kinase superfamily. Tyr protein kinase family. CSF-1/PDGF receptor subfamily. Monomer. Homodimer. Interacts with CSF1 and IL34. Interaction with dimeric CSF1 or IL34 leads to receptor homodimerization. Interacts with INPPL1/SHIP2 and THOC5. Interacts (tyrosine phosphorylated) with PLCG2 (via SH2 domain). Interacts (tyrosine phosphorylated) with PIK3R1 (via SH2 domain). Interacts (tyrosine phosphorylated) with FYN, YES1 and SRC (via SH2 domain). Interacts (tyrosine phosphorylated) with CBL, GRB2 and SLA2. Autophosphorylated in response to CSF1 or IL34 binding. Phosphorylation at Tyr-558 is important for normal down-regulation of signaling by ubiquitination, internalization and degradation. Phosphorylation at Tyr-558 and Tyr-807 is important for interaction with SRC family members, including FYN, YES1 and SRC, and for subsequent activation of these protein kinases. Phosphorylation at Tyr-696 and Tyr-921 is important for interaction with GRB2. Phosphorylation at Tyr-720 is important for interaction with PIK3R1. Phosphorylation at Tyr-720 and Tyr-807 is important for interaction with PLCG2. Phosphorylation at Tyr-977 is important for interaction with CBL. Dephosphorylation by PTPN2 negatively regulates downstream signaling and macrophage differentiation. In terms of processing, ubiquitinated. Becomes rapidly polyubiquitinated after autophosphorylation, leading to its degradation.

The protein resides in the cell membrane. The catalysed reaction is L-tyrosyl-[protein] + ATP = O-phospho-L-tyrosyl-[protein] + ADP + H(+). Its activity is regulated as follows. Present in an inactive conformation in the absence of bound ligand. CSF1 or IL34 binding leads to dimerization and activation by autophosphorylation on tyrosine residues. Tyrosine-protein kinase that acts as a cell-surface receptor for CSF1 and IL34 and plays an essential role in the regulation of survival, proliferation and differentiation of hematopoietic precursor cells, especially mononuclear phagocytes, such as macrophages and monocytes. Promotes the release of pro-inflammatory chemokines in response to IL34 and CSF1, and thereby plays an important role in innate immunity and in inflammatory processes. Plays an important role in the regulation of osteoclast proliferation and differentiation, the regulation of bone resorption, and is required for normal bone and tooth development. Required for normal male and female fertility, and for normal development of milk ducts and acinar structures in the mammary gland during pregnancy. Promotes reorganization of the actin cytoskeleton, regulates formation of membrane ruffles, cell adhesion and cell migration, and promotes cancer cell invasion. Activates several signaling pathways in response to ligand binding, including the ERK1/2 and the JNK pathway. Phosphorylates PIK3R1, PLCG2, GRB2, SLA2 and CBL. Activation of PLCG2 leads to the production of the cellular signaling molecules diacylglycerol and inositol 1,4,5-trisphosphate, that then lead to the activation of protein kinase C family members, especially PRKCD. Phosphorylation of PIK3R1, the regulatory subunit of phosphatidylinositol 3-kinase, leads to activation of the AKT1 signaling pathway. Activated CSF1R also mediates activation of the MAP kinases MAPK1/ERK2 and/or MAPK3/ERK1, and of the SRC family kinases SRC, FYN and YES1. Activated CSF1R transmits signals both via proteins that directly interact with phosphorylated tyrosine residues in its intracellular domain, or via adapter proteins, such as GRB2. Promotes activation of STAT family members STAT3, STAT5A and/or STAT5B. Promotes tyrosine phosphorylation of SHC1 and INPP5D/SHIP-1. Receptor signaling is down-regulated by protein phosphatases, such as INPP5D/SHIP-1, that dephosphorylate the receptor and its downstream effectors, and by rapid internalization of the activated receptor. In the central nervous system, may play a role in the development of microglia macrophages. The sequence is that of Macrophage colony-stimulating factor 1 receptor (CSF1R) from Felis catus (Cat).